Reading from the N-terminus, the 289-residue chain is S-methyl-5'-thioadenosine phosphorylase (289 aa).

Phosphate is bound by residues S24, R66 to H67, and T99 to A100. M202 serves as a coordination point for substrate. T203 lines the phosphate pocket. D226 to D228 contacts substrate.

Belongs to the PNP/MTAP phosphorylase family. MTAP subfamily. As to quaternary structure, homotrimer.

The protein resides in the cytoplasm. It localises to the nucleus. The enzyme catalyses S-methyl-5'-thioadenosine + phosphate = 5-(methylsulfanyl)-alpha-D-ribose 1-phosphate + adenine. It functions in the pathway amino-acid biosynthesis; L-methionine biosynthesis via salvage pathway; S-methyl-5-thio-alpha-D-ribose 1-phosphate from S-methyl-5'-thioadenosine (phosphorylase route): step 1/1. In terms of biological role, catalyzes the reversible phosphorylation of S-methyl-5'-thioadenosine (MTA) to adenine and 5-methylthioribose-1-phosphate. Involved in the breakdown of MTA, a major by-product of polyamine biosynthesis. Responsible for the first step in the methionine salvage pathway after MTA has been generated from S-adenosylmethionine. Has broad substrate specificity with 6-aminopurine nucleosides as preferred substrates. The chain is S-methyl-5'-thioadenosine phosphorylase from Drosophila pseudoobscura pseudoobscura (Fruit fly).